The following is a 255-amino-acid chain: Phosphoribosyl isomerase A (255 aa).

Asp21 functions as the Proton acceptor in the catalytic mechanism. The Proton donor role is filled by Asp140.

It belongs to the HisA/HisF family.

It localises to the cytoplasm. The enzyme catalyses 1-(5-phospho-beta-D-ribosyl)-5-[(5-phospho-beta-D-ribosylamino)methylideneamino]imidazole-4-carboxamide = 5-[(5-phospho-1-deoxy-D-ribulos-1-ylimino)methylamino]-1-(5-phospho-beta-D-ribosyl)imidazole-4-carboxamide. The catalysed reaction is N-(5-phospho-beta-D-ribosyl)anthranilate = 1-(2-carboxyphenylamino)-1-deoxy-D-ribulose 5-phosphate. The protein operates within amino-acid biosynthesis; L-histidine biosynthesis; L-histidine from 5-phospho-alpha-D-ribose 1-diphosphate: step 4/9. Its pathway is amino-acid biosynthesis; L-tryptophan biosynthesis; L-tryptophan from chorismate: step 3/5. In terms of biological role, involved in both the histidine and tryptophan biosynthetic pathways. This is Phosphoribosyl isomerase A from Mycolicibacterium vanbaalenii (strain DSM 7251 / JCM 13017 / BCRC 16820 / KCTC 9966 / NRRL B-24157 / PYR-1) (Mycobacterium vanbaalenii).